The sequence spans 656 residues: PAN2-PAN3 deadenylation complex subunit PAN3 (656 aa).

The C3H1-type zinc-finger motif lies at 15-44; it reads SFKGTQCRNIIIHGYCKFENEGCQFNHGNS. A disordered region spans residues 71–104; sequence KTSSSFTPGKSPAVRSPDFSSLPAFQPGAPVNDQ. The PABPC-interacting motif-2 (PAM-2) motif lies at 128–148; the sequence is AFAPSFNPYASESFTPSVSAG. Residues 271 to 525 are pseudokinase domain; sequence QVFPRGSLPD…NIEDFTKLFS (255 aa). ATP contacts are provided by residues Arg325, 375–382, and 428–429; these read DYYPQSQS and KK. A coiled-coil region spans residues 526–564; sequence HKVLSVVNSLQYNSEYLEQQLSRELENARLFRLMCKLNA. The segment at 565–656 is knob domain; that stretch reads IYGRLESRID…IDSTFRALTQ (92 aa).

Belongs to the protein kinase superfamily. PAN3 family. As to quaternary structure, homodimer. Forms a heterotrimer with a catalytic subunit PAN2 to form the poly(A)-nuclease (PAN) deadenylation complex. Interacts (via PAM-2 motif) with poly(A)-binding protein PAB1 (via PABC domain), conferring substrate specificity of the enzyme complex.

The protein localises to the cytoplasm. In terms of biological role, regulatory subunit of the poly(A)-nuclease (PAN) deadenylation complex, one of two cytoplasmic mRNA deadenylases involved in mRNA turnover. PAN specifically shortens poly(A) tails of RNA and the activity is stimulated by poly(A)-binding protein PAB1. PAN deadenylation is followed by rapid degradation of the shortened mRNA tails by the CCR4-NOT complex. Deadenylated mRNAs are then degraded by two alternative mechanisms, namely exosome-mediated 3'-5' exonucleolytic degradation, or deadenylation-dependent mRNA decaping and subsequent 5'-3' exonucleolytic degradation by XRN1. May also be involved in post-transcriptional maturation of mRNA poly(A) tails. PAN3 acts as a positive regulator for PAN activity, recruiting the catalytic subunit PAN2 to mRNA via its interaction with RNA and with PAB1. The chain is PAN2-PAN3 deadenylation complex subunit PAN3 from Kluyveromyces lactis (strain ATCC 8585 / CBS 2359 / DSM 70799 / NBRC 1267 / NRRL Y-1140 / WM37) (Yeast).